Consider the following 114-residue polypeptide: T cell receptor beta variable 27 (114 aa).

An N-terminal signal peptide occupies residues 1–21 (MGPQLLGYVVLCLLGAGPLEA). In terms of domain architecture, Ig-like spans 22 to 114 (QVTQNPRYLI…TSLYFCASSL (93 aa)). Cys-42 and Cys-110 form a disulfide bridge. Asn-103 carries an N-linked (GlcNAc...) asparagine glycan.

In terms of assembly, alpha-beta TR is a heterodimer composed of an alpha and beta chain; disulfide-linked. The alpha-beta TR is associated with the transmembrane signaling CD3 coreceptor proteins to form the TR-CD3 (TcR or TCR). The assembly of alpha-beta TR heterodimers with CD3 occurs in the endoplasmic reticulum where a single alpha-beta TR heterodimer associates with one CD3D-CD3E heterodimer, one CD3G-CD3E heterodimer and one CD247 homodimer forming a stable octameric structure. CD3D-CD3E and CD3G-CD3E heterodimers preferentially associate with TR alpha and TR beta chains, respectively. The association of the CD247 homodimer is the last step of TcR assembly in the endoplasmic reticulum and is required for transport to the cell surface.

The protein resides in the cell membrane. In terms of biological role, v region of the variable domain of T cell receptor (TR) beta chain that participates in the antigen recognition. Alpha-beta T cell receptors are antigen specific receptors which are essential to the immune response and are present on the cell surface of T lymphocytes. Recognize peptide-major histocompatibility (MH) (pMH) complexes that are displayed by antigen presenting cells (APC), a prerequisite for efficient T cell adaptive immunity against pathogens. Binding of alpha-beta TR to pMH complex initiates TR-CD3 clustering on the cell surface and intracellular activation of LCK that phosphorylates the ITAM motifs of CD3G, CD3D, CD3E and CD247 enabling the recruitment of ZAP70. In turn ZAP70 phosphorylates LAT, which recruits numerous signaling molecules to form the LAT signalosome. The LAT signalosome propagates signal branching to three major signaling pathways, the calcium, the mitogen-activated protein kinase (MAPK) kinase and the nuclear factor NF-kappa-B (NF-kB) pathways, leading to the mobilization of transcription factors that are critical for gene expression and essential for T cell growth and differentiation. The T cell repertoire is generated in the thymus, by V-(D)-J rearrangement. This repertoire is then shaped by intrathymic selection events to generate a peripheral T cell pool of self-MH restricted, non-autoaggressive T cells. Post-thymic interaction of alpha-beta TR with the pMH complexes shapes TR structural and functional avidity. This chain is T cell receptor beta variable 27, found in Homo sapiens (Human).